The primary structure comprises 155 residues: 3-hydroxyacyl-[acyl-carrier-protein] dehydratase FabZ (155 aa).

Residue H59 is part of the active site.

The protein belongs to the thioester dehydratase family. FabZ subfamily.

It localises to the cytoplasm. It carries out the reaction a (3R)-hydroxyacyl-[ACP] = a (2E)-enoyl-[ACP] + H2O. Its function is as follows. Involved in unsaturated fatty acids biosynthesis. Catalyzes the dehydration of short chain beta-hydroxyacyl-ACPs and long chain saturated and unsaturated beta-hydroxyacyl-ACPs. The chain is 3-hydroxyacyl-[acyl-carrier-protein] dehydratase FabZ from Bartonella quintana (strain Toulouse) (Rochalimaea quintana).